The following is a 195-amino-acid chain: MRVAEVVRNTSETQIRVKLDLDGTGRQKLATGVPFLDHMLDQIARHGLVDLEVEAHGDTHIDDHHTVEDVGITLGQAVAKAIGDRKGIRRYGHSYVPLDEALSRVVIDFSGRPGLEFHVPFTRARIGTFDVDLSIEFFRGFVNHAGVTLHIDNLRGINAHHQLETVFKAFGRALRAAVELDERAAGQIPSTKGSL.

Belongs to the imidazoleglycerol-phosphate dehydratase family.

The protein resides in the cytoplasm. It carries out the reaction D-erythro-1-(imidazol-4-yl)glycerol 3-phosphate = 3-(imidazol-4-yl)-2-oxopropyl phosphate + H2O. It participates in amino-acid biosynthesis; L-histidine biosynthesis; L-histidine from 5-phospho-alpha-D-ribose 1-diphosphate: step 6/9. This Burkholderia cenocepacia (strain HI2424) protein is Imidazoleglycerol-phosphate dehydratase.